We begin with the raw amino-acid sequence, 148 residues long: Small ribosomal subunit protein bS6 (148 aa).

The tract at residues 96–148 is disordered; it reads HEEGQSAMLTRRDDRRERDGDDRPRRREGGFDRGDRGDRGPRRPRDTEAGEGA.

It belongs to the bacterial ribosomal protein bS6 family.

Functionally, binds together with bS18 to 16S ribosomal RNA. This chain is Small ribosomal subunit protein bS6, found in Brucella canis (strain ATCC 23365 / NCTC 10854 / RM-666).